A 437-amino-acid chain; its full sequence is Glutamate-1-semialdehyde 2,1-aminomutase (437 aa).

K277 is subject to N6-(pyridoxal phosphate)lysine.

This sequence belongs to the class-III pyridoxal-phosphate-dependent aminotransferase family. HemL subfamily. In terms of assembly, homodimer. Pyridoxal 5'-phosphate serves as cofactor.

It is found in the cytoplasm. It carries out the reaction (S)-4-amino-5-oxopentanoate = 5-aminolevulinate. It functions in the pathway porphyrin-containing compound metabolism; protoporphyrin-IX biosynthesis; 5-aminolevulinate from L-glutamyl-tRNA(Glu): step 2/2. Its pathway is porphyrin-containing compound metabolism; chlorophyll biosynthesis. This chain is Glutamate-1-semialdehyde 2,1-aminomutase, found in Thermosynechococcus vestitus (strain NIES-2133 / IAM M-273 / BP-1).